A 317-amino-acid chain; its full sequence is Nicotianamine synthase (317 aa).

This sequence belongs to the nicotianamine synthase (NAS)-like family. As to quaternary structure, homomultimer. Leaves and roots.

The catalysed reaction is 3 S-adenosyl-L-methionine = nicotianamine + 3 S-methyl-5'-thioadenosine + 3 H(+). In terms of biological role, synthesizes nicotianamine, a polyamine that serves as a sensor for the physiological iron status within the plant, and/or might be involved in the transport of iron. This chain is Nicotianamine synthase (CHLN), found in Solanum lycopersicum (Tomato).